We begin with the raw amino-acid sequence, 507 residues long: Cytochrome P450 monooxygenase helB2 (507 aa).

An N-terminal signal peptide occupies residues 1–22 (MALPIILCLAVILWTSWRLLDA). Heme is bound at residue Cys-436.

This sequence belongs to the cytochrome P450 family. Heme is required as a cofactor.

The protein operates within mycotoxin biosynthesis. Its function is as follows. Cytochrome P450 monooxygenase; part of the gene cluster that mediates the biosynthesis of helvolic acid, an antibacterial nortriterpenoid. Protostadienol synthase helA cyclizes (3S)-oxidosqualene to (17Z)-protosta-17(20),24-dien-3-beta-ol (protostadienol). The synthesis of protostadienol is followed by several steps of monooxygenation, dehydrogenation, and acyl transfer to yield the final helvolic acid. Following the cyclization to the tetracyclic protostadienol by helA, cytochrome P450 monooxygenases helB1-mediated and helB2-mediated oxidation at C-4 and C-16, acyltransferase helD2-dependent acetylation of 16-OH, oxidation of C-21 by cytochrome P450 monooxygenase helB4, and short chain dehydrogenase helC-dependent oxidative decarboxylation yield the fusidane skeleton. This intermediate is further modified in three additional steps mediated by the cytochrome P450 monooxygenase helB3, the acyltransferase helD1, and the 3-ketosteroid 1-dehydrogenase helE to give helvolic acid. Compared with the late stages in the biosynthesis of helvolic acid, enzymes involved in the early stage modifications act in a relatively strict order. The hydroxylation of C-16 by helB1 and subsequent acetylation by helD2 should occur before the helB3-mediated oxidation of C-21. C-4 demethylation in fusidane-type antibiotics proceeds in an unusual manner though it is also achieved by oxidative decarboxylation. The methyl group at C-4 beta position is oxidized by helB1 and subsequently removed by the short chain dehydrogenase helC. This Aspergillus fumigatus (strain ATCC MYA-4609 / CBS 101355 / FGSC A1100 / Af293) (Neosartorya fumigata) protein is Cytochrome P450 monooxygenase helB2.